Consider the following 97-residue polypeptide: Small ribosomal subunit protein bS6 (97 aa).

Belongs to the bacterial ribosomal protein bS6 family.

Binds together with bS18 to 16S ribosomal RNA. The sequence is that of Small ribosomal subunit protein bS6 from Lactococcus lactis subsp. cremoris (strain MG1363).